Reading from the N-terminus, the 55-residue chain is Conotoxin Cal14.14 (55 aa).

A signal peptide spans 1 to 20 (MFRLGVFLLTFLLLVSMATS). 2 disulfides stabilise this stretch: C34–C48 and C38–C52.

As to expression, expressed by the venom duct.

It localises to the secreted. Probable neurotoxin. This chain is Conotoxin Cal14.14, found in Californiconus californicus (California cone).